A 501-amino-acid chain; its full sequence is MARDLRGFIQLLETRGQLRRITAEVDPDLEVAEISNRMLQAGGPGLLFENVKGSPFPVAVNLMGTVERICWAMNMDHPLELEDLGKKLALLQQPKPPKKISQAIDFGKVLFDVLKAKPGRNFFPPCQEVVIDGENLDLNQIPLIRPYPGDAGKIITLGLVITKDCETGTPNVGVYRLQLQSKTTMTVHWLSVRGGARHLRKAAEQGKKLEVAIALGVDPLIIMAAATPIPVDLSEWLFAGLYGGSGVALAKCKTVDLEVPADSEFVLEGTITPGEMLPDGPFGDHMGYYGGVEDSPLVRFQCLTHRKNPVYLTTFSGRPPKEEAMMAIALNRIYTPILRQQVSEITDFFLPMEALSYKAAIISIDKAYPGQAKRAALAFWSALPQFTYTKFVIVVDKSINIRDPRQVVWAISSKVDPVRDVFILPETPFDSLDFASEKIGLGGRMGIDATTKIPPETDHEWGEVLESDPAMAEQVSQRWAEYGLGDINLTEVNPNLFGYDV.

It belongs to the UbiD family.

This is an uncharacterized protein from Synechocystis sp. (strain ATCC 27184 / PCC 6803 / Kazusa).